The following is a 100-amino-acid chain: Nucleoid-associated protein Rcas_2292 (100 aa).

It belongs to the YbaB/EbfC family. Homodimer.

The protein localises to the cytoplasm. It is found in the nucleoid. Binds to DNA and alters its conformation. May be involved in regulation of gene expression, nucleoid organization and DNA protection. This chain is Nucleoid-associated protein Rcas_2292, found in Roseiflexus castenholzii (strain DSM 13941 / HLO8).